The primary structure comprises 173 residues: ATP synthase subunit b (173 aa).

The helical transmembrane segment at 12–34 threads the bilayer; sequence AFGNLYAIGWSAVNFLVLLALMY.

This sequence belongs to the ATPase B chain family. As to quaternary structure, F-type ATPases have 2 components, F(1) - the catalytic core - and F(0) - the membrane proton channel. F(1) has five subunits: alpha(3), beta(3), gamma(1), delta(1), epsilon(1). F(0) has three main subunits: a(1), b(2) and c(10-14). The alpha and beta chains form an alternating ring which encloses part of the gamma chain. F(1) is attached to F(0) by a central stalk formed by the gamma and epsilon chains, while a peripheral stalk is formed by the delta and b chains.

It localises to the cell membrane. Functionally, f(1)F(0) ATP synthase produces ATP from ADP in the presence of a proton or sodium gradient. F-type ATPases consist of two structural domains, F(1) containing the extramembraneous catalytic core and F(0) containing the membrane proton channel, linked together by a central stalk and a peripheral stalk. During catalysis, ATP synthesis in the catalytic domain of F(1) is coupled via a rotary mechanism of the central stalk subunits to proton translocation. In terms of biological role, component of the F(0) channel, it forms part of the peripheral stalk, linking F(1) to F(0). In Syntrophomonas wolfei subsp. wolfei (strain DSM 2245B / Goettingen), this protein is ATP synthase subunit b.